The chain runs to 1116 residues: Phosphatidylinositol 4-kinase beta 2 (1116 aa).

The PIK helical domain occupies 1–143 (MQMAQFLSLV…SRIQEKCQIA (143 aa)). 8 repeat units span residues 210–229 (ADDN…RDAL), 242–261 (CEKD…EDDE), 264–283 (SNSE…EEEE), 286–304 (NNSE…DEEE), 307–326 (SSSD…DEEE), 329–348 (ANSE…EDEE), 351–370 (ANTE…EDDK), and 378–396 (EEKD…DEKR). The tract at residues 210–507 (ADDNKIFKRL…FRDRDRSVED (298 aa)) is 11 X 20 AA approximate repeats (PPC). Residues 394–404 (EKRNGNERNET) show a composition bias toward basic and acidic residues. Positions 394–417 (EKRNGNERNETDETVYTDETSGED) are disordered. Residues 405–415 (DETVYTDETSG) are compositionally biased toward acidic residues. Copy 9 of the repeat occupies 418–436 (NGREGFFKKLFKEKFEDKP). 2 positions are modified to phosphoserine: serine 447 and serine 452. 2 tandem repeats follow at residues 452–470 (SSEF…EDVK) and 488–507 (PGTE…SVED). 2 disordered regions span residues 515 to 540 (KYKE…LPNN) and 794 to 813 (GEAP…SDAQ). The PI3K/PI4K catalytic domain occupies 830–1101 (EFWEGKRLRI…LISSSLDAWR (272 aa)). Residues 836–842 (RLRIRKD) are G-loop. The tract at residues 964-972 (QIKDRHNGN) is catalytic loop. Positions 983-1007 (HIDFGFMLSNSPGGVNFESAPFKLT) are activation loop.

It belongs to the PI3/PI4-kinase family. Type III PI4K subfamily.

Its subcellular location is the cell membrane. It localises to the golgi apparatus. The protein resides in the trans-Golgi network. The protein localises to the cytoplasmic vesicle membrane. It carries out the reaction a 1,2-diacyl-sn-glycero-3-phospho-(1D-myo-inositol) + ATP = a 1,2-diacyl-sn-glycero-3-phospho-(1D-myo-inositol 4-phosphate) + ADP + H(+). Functionally, acts on phosphatidylinositol (PtdIns) in the first committed step in the production of the second messenger inositol-1,4,5-trisphosphate. Necessary for proper organization of the trans-Golgi network (TGN) and post-Golgi secretion in root hairs. Together with PI4KB1, required during polarized root hair expansion and pollen tube elongation. Functions redundantly with PI4KB1 upstream of the cold response phosphoinositide-dependent phospholipase C (PI-PLC) pathway. This Arabidopsis thaliana (Mouse-ear cress) protein is Phosphatidylinositol 4-kinase beta 2 (PI4KB2).